A 413-amino-acid polypeptide reads, in one-letter code: Eukaryotic initiation factor 4A-7 (413 aa).

The short motif at 40–68 (DSFDAMGLQENLLRGIYAYGFEKPSAIQQ) is the Q motif element. The Helicase ATP-binding domain maps to 71 to 241 (IVPFCKGLDV…RKFMNKPVRI (171 aa)). Residue 84-91 (AQSGTGKT) participates in ATP binding. Residues 189-192 (DEAD) carry the DEAD box motif. The region spanning 252–413 (GIKQFYVNVD…ELPANVADLL (162 aa)) is the Helicase C-terminal domain.

This sequence belongs to the DEAD box helicase family. eIF4A subfamily. In terms of assembly, eIF4F is a multi-subunit complex, the composition of which varies with external and internal environmental conditions. It is composed of at least EIF4A, EIF4E and EIF4G.

It carries out the reaction ATP + H2O = ADP + phosphate + H(+). ATP-dependent RNA helicase which is a subunit of the eIF4F complex involved in cap recognition and is required for mRNA binding to ribosome. In the current model of translation initiation, eIF4A unwinds RNA secondary structures in the 5'-UTR of mRNAs which is necessary to allow efficient binding of the small ribosomal subunit, and subsequent scanning for the initiator codon. The chain is Eukaryotic initiation factor 4A-7 from Nicotiana tabacum (Common tobacco).